Reading from the N-terminus, the 232-residue chain is Protein G1-like3 (232 aa).

Disordered stretches follow at residues 20–77 (AGLL…YEAQ) and 189–232 (ARAR…GAAC). Residues 38–53 (AGGGGGGGGDGAGGSS) show a composition bias toward gly residues. The region spanning 73-200 (RYEAQKRRDW…ARGVSYEKKK (128 aa)) is the ALOG domain. Residues 198-202 (KKKRK) carry the Nuclear localization signal motif. Positions 216 to 232 (PHPPPPPPPPPSAGAAC) are enriched in pro residues.

This sequence belongs to the plant homeotic and developmental regulators ALOG protein family.

It localises to the nucleus. Probable transcription regulator that acts as a developmental regulator by promoting cell growth in response to light. In Oryza sativa subsp. indica (Rice), this protein is Protein G1-like3.